The chain runs to 795 residues: RAS guanyl-releasing protein 1 (795 aa).

Residues 1 to 12 (MGTLGKAREAPR) are compositionally biased toward basic and acidic residues. The disordered stretch occupies residues 1–37 (MGTLGKAREAPRKPCHGSRAGPKARLEAKSTNSPLPA). In terms of domain architecture, N-terminal Ras-GEF spans 53–176 (LGHLAKGASL…HLIDTTQINS (124 aa)). The ras exchanger motif region; required for transforming activity stretch occupies residues 57-110 (AKGASLDDLIDSCIQSFDADGNLCRNNQLLQVMLTMHRIIISSAELLQKVMNLY). A Phosphothreonine; by PKC modification is found at Thr184. Residues 205–436 (EPEELSEHLT…YELSYAREPR (232 aa)) form the Ras-GEF domain. EF-hand domains lie at 470–505 (HVQRMVDSVFKNYDLDQDGYISQEEFEKIAASFPFS) and 506–532 (FCVMDKDREGLISRDEITAYFMRASSI). 5 residues coordinate Ca(2+): Asp483, Asp485, Asp487, Tyr489, and Glu494. The Phorbol-ester/DAG-type zinc finger occupies 541-591 (PHNFQETTYLKPTFCDNCAGFLWGVIKQGYRCKDCGMNCHKQCKDLVVFEC). A Phosphoserine modification is found at Ser597. The suppress the PT region-mediated translocation to plasma membrane stretch occupies residues 686–694 (TPGHFVLSS). A PT region; mediates the BCR-dependent translocation to plasma membrane region spans residues 717-795 (LVRKRAFVKW…LAQMDHGDSA (79 aa)). The stretch at 738–779 (ELHLRLRTYQELEQEINTLKADNDALKIQLKYAQKKIESLQL) forms a coiled coil.

It belongs to the RASGRP family. As to quaternary structure, homodimer. Forms a signaling complex with DGKZ and HRAS. Interacts with F-actin. Interacts with SKAP1. In terms of tissue distribution, detected in spleen and thymus. Expressed by mature thymocytes and to a lower extent by bone marrow-derived mast cells (at protein level). Detected in B-cells and keratinocytes (at protein level).

The protein resides in the cytoplasm. It localises to the cytosol. Its subcellular location is the cell membrane. It is found in the golgi apparatus membrane. The protein localises to the endoplasmic reticulum membrane. With respect to regulation, autoinhibited. Activated by diacylglycerol and calcium binding, which induces a conformational change releasing the autoinhibitory state. Regulated by DGKA. Regulated by DGKZ. Regulated by PLC gamma and F-actin polymerization. Functionally, functions as a calcium- and diacylglycerol (DAG)-regulated nucleotide exchange factor specifically activating Ras through the exchange of bound GDP for GTP. Activates the Erk/MAP kinase cascade. Regulates T-cell/B-cell development, homeostasis and differentiation by coupling T-lymphocyte/B-lymphocyte antigen receptors to Ras. Regulates NK cell cytotoxicity and ITAM-dependent cytokine production by activation of Ras-mediated ERK and JNK pathways. Functions in mast cell degranulation and cytokine secretion, regulating FcERI-evoked allergic responses. May also function in differentiation of other cell types. Proto-oncogene, which promotes T-cell lymphomagenesis when its expression is deregulated. The protein is RAS guanyl-releasing protein 1 (Rasgrp1) of Mus musculus (Mouse).